The primary structure comprises 120 residues: U13-lycotoxin-Ls1a (120 aa).

Positions 1–16 (MKILFVLISILYAVYC) are cleaved as a signal peptide. A propeptide spanning residues 17–54 (FSSEEDVDSAYLANELEPVEDINSEQYAALEPKEEQGR) is cleaved from the precursor. 4 cysteine pairs are disulfide-bonded: cysteine 56-cysteine 70, cysteine 63-cysteine 76, cysteine 69-cysteine 87, and cysteine 78-cysteine 85. Residues 56–95 (CADMGQDCKDDCDCCLNIATCNCWFGRYFCSCTFGDYQTC) enclose the Agouti domain.

It belongs to the neurotoxin 05 (agouti) family. In terms of processing, contains 6 disulfide bonds. Expressed by the venom gland.

The protein localises to the secreted. This chain is U13-lycotoxin-Ls1a, found in Lycosa singoriensis (Wolf spider).